The sequence spans 147 residues: Hemoglobin subunit beta (147 aa).

The 145-residue stretch at 3–147 (EWTDFERATI…VVSSLGRQYH (145 aa)) folds into the Globin domain. Heme b is bound by residues H64 and H93.

This sequence belongs to the globin family. In terms of assembly, hb 1 is a heterotetramer of two alpha-1 and two beta chains. Hb 2 is a heterotetramer of two alpha-2 and two beta chains. In terms of tissue distribution, red blood cells.

Involved in oxygen transport from gills to the various peripheral tissues. This is Hemoglobin subunit beta (hbb) from Cottoperca gobio (Frogmouth).